A 688-amino-acid chain; its full sequence is Eukaryotic translation initiation factor 3 subunit B (688 aa).

The tract at residues 1–32 is disordered; it reads MAKKKGENYDSDGGDDQDYDEEPNFDDPEGFV. The segment covering 9-32 has biased composition (acidic residues); sequence YDSDGGDDQDYDEEPNFDDPEGFV. An RRM domain is found at 57–141; it reads NVIVVDNIPV…HTLLVNLFSD (85 aa). 6 WD repeats span residues 208 to 246, 247 to 287, 291 to 329, 332 to 367, 440 to 482, and 527 to 572; these read RDRF…KINK, FPHS…EKRS, DGTS…LLDK, IKVQ…TLLE, EVKE…EPTM, and GDHF…KRVN. Residues 613–642 adopt a coiled-coil conformation; sequence RIRMTRASKELLEKRAKLREQFVEYRTKRV.

The protein belongs to the eIF-3 subunit B family. Component of the eukaryotic translation initiation factor 3 (eIF-3) complex.

The protein resides in the cytoplasm. RNA-binding component of the eukaryotic translation initiation factor 3 (eIF-3) complex, which is involved in protein synthesis of a specialized repertoire of mRNAs and, together with other initiation factors, stimulates binding of mRNA and methionyl-tRNAi to the 40S ribosome. The eIF-3 complex specifically targets and initiates translation of a subset of mRNAs involved in cell proliferation. The polypeptide is Eukaryotic translation initiation factor 3 subunit B (Aedes aegypti (Yellowfever mosquito)).